The following is a 1444-amino-acid chain: ABC transporter G family member 39 (1444 aa).

Residues 1–36 (MDIVRMGSVASGGGSVRRTASSWRGTSGRSDAFGRS) are disordered. The span at 19 to 29 (TASSWRGTSGR) shows a compositional bias: polar residues. One can recognise an ABC transporter 1 domain in the interval 154-426 (LSAMRIVSSG…FEAMGFKCPE (273 aa)). 187–194 (GPPGSGKT) contributes to the ATP binding site. The ABC transmembrane type-2 1 domain occupies 504-717 (ELTKACFSRE…AQNAIAVNEF (214 aa)). The next 6 membrane-spanning stretches (helical) occupy residues 522-542 (FVYI…MTVF), 555-575 (GAIF…NGFA), 610-630 (IPIS…VMGF), 642-662 (VLLV…AALG), 667-687 (VADT…GFLI), and 754-774 (IGVG…ILFL). The region spanning 846 to 1098 (ITFDNIRYSV…HLINYFEGIQ (253 aa)) is the ABC transporter 2 domain. Residue 891 to 898 (GVSGAGKT) participates in ATP binding. One can recognise an ABC transmembrane type-2 2 domain in the interval 1171–1385 (TQCMACLWKQ…TLYGLVASQY (215 aa)). The next 7 helical transmembrane spans lie at 1192-1212 (ATRI…FLNL), 1220-1240 (LDLF…GIQN), 1278-1298 (IPHI…LIGF), 1305-1325 (FFWY…YGMM), 1335-1355 (IAAI…GFLI), 1362-1382 (IWWR…GLVA), and 1414-1434 (LGYV…VFAF).

Belongs to the ABC transporter superfamily. ABCG family. PDR (TC 3.A.1.205) subfamily.

It localises to the membrane. Its function is as follows. May be a general defense protein. This Oryza sativa subsp. japonica (Rice) protein is ABC transporter G family member 39.